The primary structure comprises 172 residues: General stress protein 18 (172 aa).

In terms of domain architecture, PfpI endopeptidase spans 3–171; that stretch reads KKIAVVLTYY…FNRESLALLE (169 aa). Cysteine 104 (nucleophile) is an active-site residue. Histidine 105 is an active-site residue.

This sequence belongs to the peptidase C56 family.

Functions in the protection against aldehyde-stress, possibly by degrading damaged proteins. In Bacillus subtilis (strain 168), this protein is General stress protein 18 (yfkM).